The sequence spans 277 residues: Small ribosomal subunit protein uS2 (277 aa).

The disordered stretch occupies residues 255-277; the sequence is AVATTDEASAPSAAATETTTEEG. A compositionally biased stretch (low complexity) spans 257–277; that stretch reads ATTDEASAPSAAATETTTEEG.

This sequence belongs to the universal ribosomal protein uS2 family.

This chain is Small ribosomal subunit protein uS2, found in Mycobacteroides abscessus (strain ATCC 19977 / DSM 44196 / CCUG 20993 / CIP 104536 / JCM 13569 / NCTC 13031 / TMC 1543 / L948) (Mycobacterium abscessus).